The sequence spans 192 residues: Fe/S biogenesis protein NfuA (192 aa).

[4Fe-4S] cluster contacts are provided by cysteine 149 and cysteine 152.

It belongs to the NfuA family. As to quaternary structure, homodimer. Requires [4Fe-4S] cluster as cofactor.

Functionally, involved in iron-sulfur cluster biogenesis. Binds a 4Fe-4S cluster, can transfer this cluster to apoproteins, and thereby intervenes in the maturation of Fe/S proteins. Could also act as a scaffold/chaperone for damaged Fe/S proteins. This Pseudoalteromonas atlantica (strain T6c / ATCC BAA-1087) protein is Fe/S biogenesis protein NfuA.